The chain runs to 238 residues: Uridylate kinase (238 aa).

12-15 (KLSG) contacts ATP. Residue Gly54 coordinates UMP. Positions 55 and 59 each coordinate ATP. Residues Asp74 and 135–142 (TGNPFFTT) each bind UMP. 4 residues coordinate ATP: Thr162, Asn163, Tyr168, and Asp171.

Belongs to the UMP kinase family. Homohexamer.

Its subcellular location is the cytoplasm. The catalysed reaction is UMP + ATP = UDP + ADP. It participates in pyrimidine metabolism; CTP biosynthesis via de novo pathway; UDP from UMP (UMPK route): step 1/1. Its activity is regulated as follows. Inhibited by UTP. In terms of biological role, catalyzes the reversible phosphorylation of UMP to UDP. The polypeptide is Uridylate kinase (Rhodopseudomonas palustris (strain BisB18)).